The primary structure comprises 312 residues: Malate dehydrogenase (312 aa).

NAD(+) is bound by residues 12-17 and Asp36; that span reads GAGFTG. Residues Arg87 and Arg93 each contribute to the substrate site. NAD(+) contacts are provided by residues Asn100 and 123 to 125; that span reads LTN. A substrate-binding site is contributed by Asn125. Ser149 carries the post-translational modification Phosphoserine. Residue Arg156 participates in substrate binding. His180 functions as the Proton acceptor in the catalytic mechanism.

This sequence belongs to the LDH/MDH superfamily. MDH type 3 family.

The catalysed reaction is (S)-malate + NAD(+) = oxaloacetate + NADH + H(+). In terms of biological role, catalyzes the reversible oxidation of malate to oxaloacetate. The chain is Malate dehydrogenase from Bacillus pumilus (strain SAFR-032).